A 142-amino-acid chain; its full sequence is Putative pre-16S rRNA nuclease (142 aa).

This sequence belongs to the YqgF nuclease family.

The protein localises to the cytoplasm. Could be a nuclease involved in processing of the 5'-end of pre-16S rRNA. This is Putative pre-16S rRNA nuclease from Photobacterium profundum (strain SS9).